The primary structure comprises 380 residues: Histone deacetylase-like amidohydrolase (380 aa).

His144 acts as the Proton donor/acceptor in catalysis. Positions 181, 183, and 269 each coordinate Zn(2+).

This sequence belongs to the histone deacetylase family. Homotetramer; dimer of head-to-head dimers. Zn(2+) is required as a cofactor.

Is inhibited by azobenzenes, stilbenes and arylazopyrazoles. Functionally, probable protein deacetylase that catalyzes deacetylation of acetylated lysine residues. In vitro, exhibits high activity against artificial HDAC (histone deacetylase) substrates containing acetylated and trifluoroacetylated lysine residues. Is not able to deacetylate acetylated polyamines. In Pseudomonas aeruginosa (strain ATCC 15692 / DSM 22644 / CIP 104116 / JCM 14847 / LMG 12228 / 1C / PRS 101 / PAO1), this protein is Histone deacetylase-like amidohydrolase.